The following is a 747-amino-acid chain: Small G protein signaling modulator 3 (747 aa).

A Rab-GAP TBC domain is found at 111-302; the sequence is GVPHSMRPQL…RLWDLFFYEG (192 aa). Ser403 carries the post-translational modification Phosphoserine. A coiled-coil region spans residues 412–435; the sequence is EDDLEAMKAKNIKQTELVADLREA. The 60-residue stretch at 477 to 536 folds into the SH3 domain; the sequence is GHPRRAKALLDFERHDDDELGFRKNDIITIVSQKDEHCWVGELNGLRGWFPAKFVEVLDE. An RUN domain is found at 552-715; it reads GVTDLVRGTL…FAFSLSQDWE (164 aa).

The protein belongs to the small G protein signaling modulator family. Interacts with GJA1. Interaction with GJA1 induces its degradation. Interacts via its RUN domain with the C-terminal region of NF2. Interacts with RAB3A, RAB4A, RAB5A, RAB8A, RAB11A, RAP1A, RAP1B, RAP2A, RAP2B and PDCD6I. No interaction with RAB27A.

The protein localises to the cytoplasm. Its function is as follows. May play a cooperative role in NF2-mediated growth suppression of cells. This chain is Small G protein signaling modulator 3, found in Bos taurus (Bovine).